Reading from the N-terminus, the 385-residue chain is Tryptophan--tRNA ligase (385 aa).

The 'HIGH' region motif lies at 82–90; sequence PSGPMHIGH. Residues 253-257 carry the 'KMSKS' region motif; sequence KMSAS.

The protein belongs to the class-I aminoacyl-tRNA synthetase family.

Its subcellular location is the cytoplasm. The catalysed reaction is tRNA(Trp) + L-tryptophan + ATP = L-tryptophyl-tRNA(Trp) + AMP + diphosphate + H(+). The chain is Tryptophan--tRNA ligase from Pyrococcus furiosus (strain ATCC 43587 / DSM 3638 / JCM 8422 / Vc1).